The following is a 341-amino-acid chain: Phosphate acyltransferase (341 aa).

This sequence belongs to the PlsX family. In terms of assembly, homodimer. Probably interacts with PlsY.

The protein resides in the cytoplasm. The catalysed reaction is a fatty acyl-[ACP] + phosphate = an acyl phosphate + holo-[ACP]. It functions in the pathway lipid metabolism; phospholipid metabolism. Catalyzes the reversible formation of acyl-phosphate (acyl-PO(4)) from acyl-[acyl-carrier-protein] (acyl-ACP). This enzyme utilizes acyl-ACP as fatty acyl donor, but not acyl-CoA. This chain is Phosphate acyltransferase, found in Nostoc sp. (strain PCC 7120 / SAG 25.82 / UTEX 2576).